A 423-amino-acid polypeptide reads, in one-letter code: Cop9 signalosome complex subunit 12 (423 aa).

In terms of domain architecture, PCI spans 232–418 (GFFHLNEALL…RCIVFSKKEP (187 aa)).

The protein belongs to the CSN12 family. Component of a COP9 signalosome-like (CSN) complex, composed of RRI1/CSN5, CSN9, RRI2/CSN10, PCI8/CSN11, CSN12 and CSI1. In the complex, it probably interacts directly with RRI1/CSN5, CSN9, RRI2/CSN10 and CSI1. Interacts with SEM1 and THP3.

Its subcellular location is the cytoplasm. It is found in the nucleus. Its function is as follows. Component of the COP9 signalosome (CSN) complex that acts as an regulator of the ubiquitin (Ubl) conjugation pathway by mediating the deneddylation of the cullin subunit of SCF-type E3 ubiquitin-protein ligase complexes. The CSN complex is involved in the regulation of the mating pheromone response. CSN12 forms a complex with THP3 that is recruited to transcribed genes and required for transcription elongation. This chain is Cop9 signalosome complex subunit 12 (CSN12), found in Saccharomyces cerevisiae (strain ATCC 204508 / S288c) (Baker's yeast).